Here is a 253-residue protein sequence, read N- to C-terminus: MSESPYTSGTTHFGFRDVAAKDKQKLVGEVFTSVARNYDLMNDLMSLGVHRAWKRYFVATAQVKPGDRVLDLAGGTGDIAVLLKERVGNEGAVVLGDINAGMLSVGRDRLTNRGLVSGFDYVQCNAEALPFPDQSFDLLTISFGLRNVTDKDAALREMYRVLKVGGQARVLEFSEVTADWFKPIYDFHSFKILPRLGQLFARDADSYQYLAESIRKHPPQESLKGMMGEAGFARCHFKNLTGGIVAIHSGYKI.

Residues Thr-76, Asp-97, Asn-125–Ala-126, and Ser-142 each bind S-adenosyl-L-methionine.

Belongs to the class I-like SAM-binding methyltransferase superfamily. MenG/UbiE family.

The catalysed reaction is a 2-demethylmenaquinol + S-adenosyl-L-methionine = a menaquinol + S-adenosyl-L-homocysteine + H(+). The enzyme catalyses a 2-methoxy-6-(all-trans-polyprenyl)benzene-1,4-diol + S-adenosyl-L-methionine = a 5-methoxy-2-methyl-3-(all-trans-polyprenyl)benzene-1,4-diol + S-adenosyl-L-homocysteine + H(+). The protein operates within quinol/quinone metabolism; menaquinone biosynthesis; menaquinol from 1,4-dihydroxy-2-naphthoate: step 2/2. Its pathway is cofactor biosynthesis; ubiquinone biosynthesis. Methyltransferase required for the conversion of demethylmenaquinol (DMKH2) to menaquinol (MKH2) and the conversion of 2-polyprenyl-6-methoxy-1,4-benzoquinol (DDMQH2) to 2-polyprenyl-3-methyl-6-methoxy-1,4-benzoquinol (DMQH2). The polypeptide is Ubiquinone/menaquinone biosynthesis C-methyltransferase UbiE (Xanthomonas axonopodis pv. citri (strain 306)).